Reading from the N-terminus, the 159-residue chain is Nucleotide-binding protein PST_3153 (159 aa).

Belongs to the YajQ family.

Nucleotide-binding protein. The chain is Nucleotide-binding protein PST_3153 from Stutzerimonas stutzeri (strain A1501) (Pseudomonas stutzeri).